The following is a 66-amino-acid chain: Large ribosomal subunit protein uL29 (66 aa).

Belongs to the universal ribosomal protein uL29 family.

In Brucella abortus (strain S19), this protein is Large ribosomal subunit protein uL29.